A 98-amino-acid chain; its full sequence is NADH-ubiquinone oxidoreductase chain 4L (98 aa).

3 helical membrane passes run 1–21 (MSLTYLNIMLAFSTSLLGLLM), 31–51 (LCLEGLVLSLFVLTTLMVLTI), and 61–81 (IILLVFAACEAALGLSLLVVV).

It belongs to the complex I subunit 4L family. In terms of assembly, core subunit of respiratory chain NADH dehydrogenase (Complex I) which is composed of 45 different subunits.

The protein localises to the mitochondrion inner membrane. The catalysed reaction is a ubiquinone + NADH + 5 H(+)(in) = a ubiquinol + NAD(+) + 4 H(+)(out). Its function is as follows. Core subunit of the mitochondrial membrane respiratory chain NADH dehydrogenase (Complex I) which catalyzes electron transfer from NADH through the respiratory chain, using ubiquinone as an electron acceptor. Part of the enzyme membrane arm which is embedded in the lipid bilayer and involved in proton translocation. The protein is NADH-ubiquinone oxidoreductase chain 4L (MT-ND4L) of Chalinolobus tuberculatus (New Zealand long-tailed bat).